We begin with the raw amino-acid sequence, 186 residues long: MQQKIIKIKVGSKNPVKINAATKAMAQLFPESIIDASGMDAPSGVAAQPMTDKDTRQGAINRVHYCQQQDQQDTQADYYFAMEGGVDCFDFGPATFAYIAIGHKDQLAIGRSAILPLPMQVYRALEAGEELGHVMDRLFNTVNIKQKGGAIGLLTHGHATRESNYTQAIILAMAPLLNPDIYAQTC.

A Mg(2+)-binding site is contributed by Gln75.

The protein belongs to the YjjX NTPase family. In terms of assembly, homodimer. Mg(2+) serves as cofactor. The cofactor is Mn(2+).

It carries out the reaction XTP + H2O = XDP + phosphate + H(+). The catalysed reaction is ITP + H2O = IDP + phosphate + H(+). In terms of biological role, phosphatase that hydrolyzes non-canonical purine nucleotides such as XTP and ITP to their respective diphosphate derivatives. Probably excludes non-canonical purines from DNA/RNA precursor pool, thus preventing their incorporation into DNA/RNA and avoiding chromosomal lesions. In Shewanella baltica (strain OS195), this protein is Inosine/xanthosine triphosphatase.